The following is a 518-amino-acid chain: Glutamate--cysteine ligase (518 aa).

This sequence belongs to the glutamate--cysteine ligase type 1 family. Type 1 subfamily.

The enzyme catalyses L-cysteine + L-glutamate + ATP = gamma-L-glutamyl-L-cysteine + ADP + phosphate + H(+). It functions in the pathway sulfur metabolism; glutathione biosynthesis; glutathione from L-cysteine and L-glutamate: step 1/2. The polypeptide is Glutamate--cysteine ligase (Klebsiella pneumoniae subsp. pneumoniae (strain ATCC 700721 / MGH 78578)).